Consider the following 169-residue polypeptide: Keratin-associated protein 9-7 (169 aa).

Tandem repeats lie at residues 8–12, 13–17, 32–36, 37–41, 46–50, 51–55, 56–60, 61–65, 75–79, 80–84, 85–89, 90–94, 100–104, 139–143, 144–148, 149–153, and 163–167. Positions 8–167 are 17 X 5 AA repeats of C-C-[VGSREQH]-[SQTPN]-[STPAI]; that stretch reads CCQPTCCRTT…TCVTSCCQPA (160 aa).

This sequence belongs to the KRTAP type 9 family. As to quaternary structure, interacts with hair keratins.

Its function is as follows. In the hair cortex, hair keratin intermediate filaments are embedded in an interfilamentous matrix, consisting of hair keratin-associated proteins (KRTAP), which are essential for the formation of a rigid and resistant hair shaft through their extensive disulfide bond cross-linking with abundant cysteine residues of hair keratins. The matrix proteins include the high-sulfur and high-glycine-tyrosine keratins. This chain is Keratin-associated protein 9-7, found in Homo sapiens (Human).